Here is a 37-residue protein sequence, read N- to C-terminus: Large ribosomal subunit protein bL36c (37 aa).

This sequence belongs to the bacterial ribosomal protein bL36 family.

It is found in the plastid. The protein resides in the chloroplast. This is Large ribosomal subunit protein bL36c from Stigeoclonium helveticum (Green alga).